The chain runs to 473 residues: Cell division protein FtsP (473 aa).

Residues 1-27 constitute a signal peptide (tat-type signal); the sequence is MSLSRRQFIQASGLAMCLGALPFAVQA.

The protein belongs to the FtsP family. Post-translationally, predicted to be exported by the Tat system. The position of the signal peptide cleavage has not been experimentally proven.

The protein localises to the periplasm. Functionally, cell division protein that is required for growth during stress conditions. May be involved in protecting or stabilizing the divisomal assembly under conditions of stress. The polypeptide is Cell division protein FtsP (Xenorhabdus nematophila (strain ATCC 19061 / DSM 3370 / CCUG 14189 / LMG 1036 / NCIMB 9965 / AN6)).